The chain runs to 199 residues: dTTP/UTP pyrophosphatase (199 aa).

Catalysis depends on aspartate 73, which acts as the Proton acceptor.

This sequence belongs to the Maf family. YhdE subfamily. Requires a divalent metal cation as cofactor.

The protein resides in the cytoplasm. The enzyme catalyses dTTP + H2O = dTMP + diphosphate + H(+). The catalysed reaction is UTP + H2O = UMP + diphosphate + H(+). Its function is as follows. Nucleoside triphosphate pyrophosphatase that hydrolyzes dTTP and UTP. May have a dual role in cell division arrest and in preventing the incorporation of modified nucleotides into cellular nucleic acids. This chain is dTTP/UTP pyrophosphatase, found in Caldicellulosiruptor saccharolyticus (strain ATCC 43494 / DSM 8903 / Tp8T 6331).